We begin with the raw amino-acid sequence, 222 residues long: 2-hydroxy-3-keto-5-methylthiopentenyl-1-phosphate phosphatase (222 aa).

This sequence belongs to the HAD-like hydrolase superfamily. MtnX family.

The catalysed reaction is 2-hydroxy-5-methylsulfanyl-3-oxopent-1-enyl phosphate + H2O = 1,2-dihydroxy-5-(methylsulfanyl)pent-1-en-3-one + phosphate. It functions in the pathway amino-acid biosynthesis; L-methionine biosynthesis via salvage pathway; L-methionine from S-methyl-5-thio-alpha-D-ribose 1-phosphate: step 4/6. Dephosphorylates 2-hydroxy-3-keto-5-methylthiopentenyl-1-phosphate (HK-MTPenyl-1-P) yielding 1,2-dihydroxy-3-keto-5-methylthiopentene (DHK-MTPene). The sequence is that of 2-hydroxy-3-keto-5-methylthiopentenyl-1-phosphate phosphatase from Brevibacillus brevis (strain 47 / JCM 6285 / NBRC 100599).